The chain runs to 917 residues: Protein translocase subunit SecA 1 (917 aa).

ATP is bound by residues Gln-87, 105–109, and Asp-507; that span reads GEGKT. The interval 866–917 is disordered; the sequence is EKSPESIGEDIEGREHPQKHQPFVRQGEKIGRNDPCPCGSGKKYKQCHGKLN. Positions 901, 903, 912, and 913 each coordinate Zn(2+). Residues 907-917 show a composition bias toward basic residues; sequence KKYKQCHGKLN.

The protein belongs to the SecA family. Monomer and homodimer. Part of the essential Sec protein translocation apparatus which comprises SecA, SecYEG and auxiliary proteins SecDF-YajC and YidC. Requires Zn(2+) as cofactor.

The protein localises to the cell inner membrane. Its subcellular location is the cytoplasm. It catalyses the reaction ATP + H2O + cellular proteinSide 1 = ADP + phosphate + cellular proteinSide 2.. Functionally, part of the Sec protein translocase complex. Interacts with the SecYEG preprotein conducting channel. Has a central role in coupling the hydrolysis of ATP to the transfer of proteins into and across the cell membrane, serving both as a receptor for the preprotein-SecB complex and as an ATP-driven molecular motor driving the stepwise translocation of polypeptide chains across the membrane. The protein is Protein translocase subunit SecA 1 of Nitrosospira multiformis (strain ATCC 25196 / NCIMB 11849 / C 71).